The chain runs to 182 residues: Isopentenyl-diphosphate Delta-isomerase (182 aa).

2 residues coordinate Mn(2+): H25 and H32. The Nudix hydrolase domain occupies L30–M164. C67 is an active-site residue. H69 is a Mn(2+) binding site. E87 contacts Mg(2+). Mn(2+) contacts are provided by E114 and E116. E116 is a catalytic residue.

Belongs to the IPP isomerase type 1 family. Homodimer. Mg(2+) is required as a cofactor. Mn(2+) serves as cofactor.

It localises to the cytoplasm. It catalyses the reaction isopentenyl diphosphate = dimethylallyl diphosphate. The protein operates within isoprenoid biosynthesis; dimethylallyl diphosphate biosynthesis; dimethylallyl diphosphate from isopentenyl diphosphate: step 1/1. Catalyzes the 1,3-allylic rearrangement of the homoallylic substrate isopentenyl (IPP) to its highly electrophilic allylic isomer, dimethylallyl diphosphate (DMAPP). This chain is Isopentenyl-diphosphate Delta-isomerase, found in Escherichia coli O127:H6 (strain E2348/69 / EPEC).